We begin with the raw amino-acid sequence, 178 residues long: Ribosome maturation factor RimM (178 aa).

Positions 98–178 (DGEYYWNQLE…RILVDWDPEF (81 aa)) constitute a PRC barrel domain.

It belongs to the RimM family. In terms of assembly, binds ribosomal protein uS19.

The protein resides in the cytoplasm. In terms of biological role, an accessory protein needed during the final step in the assembly of 30S ribosomal subunit, possibly for assembly of the head region. Essential for efficient processing of 16S rRNA. May be needed both before and after RbfA during the maturation of 16S rRNA. It has affinity for free ribosomal 30S subunits but not for 70S ribosomes. This Cellvibrio japonicus (strain Ueda107) (Pseudomonas fluorescens subsp. cellulosa) protein is Ribosome maturation factor RimM.